A 1166-amino-acid polypeptide reads, in one-letter code: ATP-dependent helicase/deoxyribonuclease subunit B (1166 aa).

In terms of domain architecture, UvrD-like helicase ATP-binding spans 1–390; it reads MGVEFLVGRS…HPLIEFIRSS (390 aa). Position 8 to 15 (8 to 15) interacts with ATP; the sequence is GRSGSGKT. A UvrD-like helicase C-terminal domain is found at 281–586; sequence TKRHQHAPEL…HFSLIPPALD (306 aa). [4Fe-4S] cluster contacts are provided by Cys801, Cys1121, Cys1124, and Cys1130.

It belongs to the helicase family. AddB/RexB type 1 subfamily. As to quaternary structure, heterodimer of AddA and AddB. Requires Mg(2+) as cofactor. [4Fe-4S] cluster serves as cofactor.

Functionally, the heterodimer acts as both an ATP-dependent DNA helicase and an ATP-dependent, dual-direction single-stranded exonuclease. Recognizes the chi site generating a DNA molecule suitable for the initiation of homologous recombination. The AddB subunit has 5' -&gt; 3' nuclease activity but not helicase activity. This Bacillus velezensis (strain DSM 23117 / BGSC 10A6 / LMG 26770 / FZB42) (Bacillus amyloliquefaciens subsp. plantarum) protein is ATP-dependent helicase/deoxyribonuclease subunit B.